The primary structure comprises 61 residues: Small ribosomal subunit protein uS14 (61 aa).

The Zn(2+) site is built by Cys24, Cys27, Cys40, and Cys43.

This sequence belongs to the universal ribosomal protein uS14 family. Zinc-binding uS14 subfamily. As to quaternary structure, part of the 30S ribosomal subunit. Contacts proteins S3 and S10. The cofactor is Zn(2+).

Its function is as follows. Binds 16S rRNA, required for the assembly of 30S particles and may also be responsible for determining the conformation of the 16S rRNA at the A site. The protein is Small ribosomal subunit protein uS14 of Borreliella burgdorferi (strain ATCC 35210 / DSM 4680 / CIP 102532 / B31) (Borrelia burgdorferi).